The sequence spans 1233 residues: STE20-like serine/threonine-protein kinase (1233 aa).

Ser-14 carries the post-translational modification Phosphoserine. A Protein kinase domain is found at 34–292 (WEIIGELGDG…TSQLLQHPFV (259 aa)). ATP contacts are provided by residues 40 to 48 (LGDGAFGKV) and Lys-63. The active-site Proton acceptor is Asp-155. Thr-183 carries the phosphothreonine modification. Position 189 is a phosphoserine (Ser-189). Positions 309-351 (AEVTEEVEDGKEEDEEEEAENALPIPANKRASSDLSIASSEED) are disordered. Residues 312–328 (TEEVEDGKEEDEEEEAE) show a composition bias toward acidic residues. 7 positions are modified to phosphoserine: Ser-340, Ser-341, Ser-344, Ser-347, Ser-348, Ser-354, and Ser-372. The segment covering 363-399 (VSERTEQSTSEDKFSNKILNEKPTTDGPEKAVDEHAS) has biased composition (basic and acidic residues). 4 disordered regions span residues 363 to 453 (VSER…ENNR), 498 to 650 (VSQE…SIEE), 663 to 761 (ALGS…SGDL), and 772 to 791 (AKDS…KTLK). Residues 432-441 (PDTQDQQTVD) show a composition bias toward polar residues. Residues 518 to 529 (LTKEETQEKLGK) are compositionally biased toward basic and acidic residues. Ser-543, Ser-561, and Ser-566 each carry phosphoserine. Positions 598–607 (GGERVEDKQP) are enriched in basic and acidic residues. The segment covering 619 to 630 (QLTSTSETTRAT) has biased composition (polar residues). Residues Ser-643, Ser-647, and Ser-666 each carry the phosphoserine modification. The segment covering 690-701 (AESQAPAASQPS) has biased composition (low complexity). Residues 746–761 (TDSGTGSTVENSSGDL) show a composition bias toward polar residues. Residues Ser-775 and Ser-777 each carry the phosphoserine modification. The residue at position 812 (Thr-812) is a Phosphothreonine. Ser-816 carries the phosphoserine modification. A coiled-coil region spans residues 824 to 1067 (LRRQELRELR…LKNRQTQERA (244 aa)). The UVR domain occupies 873–908 (DQEIENLEKQQKQTIERLEQEHTNRLRDEAKRIKGE). The segment at 944-963 (KRRKEELAQSQHAQEQEFVQ) is disordered. Over residues 954–963 (QHAQEQEFVQ) the composition is skewed to low complexity. Thr-1095 is modified (phosphothreonine). The stretch at 1107–1181 (AAQEEKRQKN…ELKEWREKLR (75 aa)) forms a coiled coil. Residues 1109–1129 (QEEKRQKNERMAQHQKHESQM) are disordered.

This sequence belongs to the protein kinase superfamily. STE Ser/Thr protein kinase family. STE20 subfamily. Proteolytically cleaved by caspase-3. Post-translationally, autophosphorylated. Ubiquitously expressed.

It localises to the cytoplasm. The enzyme catalyses L-seryl-[protein] + ATP = O-phospho-L-seryl-[protein] + ADP + H(+). It carries out the reaction L-threonyl-[protein] + ATP = O-phospho-L-threonyl-[protein] + ADP + H(+). Its function is as follows. Mediates apoptosis and actin stress fiber dissolution. The polypeptide is STE20-like serine/threonine-protein kinase (Slk) (Mus musculus (Mouse)).